We begin with the raw amino-acid sequence, 828 residues long: Chitin synthase 7 (828 aa).

A run of 6 helical transmembrane segments spans residues 17–37 (VIVG…VAAF), 57–77 (AVVV…IMVV), 95–115 (VGLQ…PWLF), 444–464 (FMQN…LAIL), 473–493 (LPVG…IYFG), and 501–521 (IWLY…YMVY). Residue Asn-615 is glycosylated (N-linked (GlcNAc...) asparagine). Low complexity-rich tracts occupy residues 740–752 (SLVS…SNSN) and 813–822 (SNNDPNNSNS). 2 disordered regions span residues 740–780 (SLVS…LGRA) and 793–828 (LEIG…HQQR). An N-linked (GlcNAc...) asparagine glycan is attached at Asn-818.

Belongs to the chitin synthase family. Class VII subfamily.

It is found in the membrane. It catalyses the reaction [(1-&gt;4)-N-acetyl-beta-D-glucosaminyl](n) + UDP-N-acetyl-alpha-D-glucosamine = [(1-&gt;4)-N-acetyl-beta-D-glucosaminyl](n+1) + UDP + H(+). Its function is as follows. Polymerizes chitin, a structural polymer of the cell wall and septum, by transferring the sugar moiety of UDP-GlcNAc to the non-reducing end of the growing chitin polymer. Required for normal appressorial chitin content and for the normal formation and function of these infection structures. In Pyricularia oryzae (strain 70-15 / ATCC MYA-4617 / FGSC 8958) (Rice blast fungus), this protein is Chitin synthase 7.